The following is a 504-amino-acid chain: MDPGQQPPPQPAPQGQGQPPSQPPQGQGPPSGPGQPAPAATQAAPQAPPAGHQIVHVRGDSETDLEALFNAVMNPKTANVPQTVPMRLRKLPDSFFKPPEPKSHSRQASTDAGTAGALTPQHVRAHSSPASLQLGAVSPGTLTPTGVVSGPAATPTAQHLRQSSFEIPDDVPLPAGWEMAKTSSGQRYFLNHIDQTTTWQDPRKAMLSQMNVTAPTSPPVQQNMMNSASGPLPDGWEQAMTQDGEIYYINHKNKTTSWLDPRLDPRFAMNQRISQSAPVKQPPPLAPQSPQGGVMGGSNSNQQQQMRLQQLQMEKERLRLKQQELLRQAMRNINPSTANSPKCQELALRSQLPTLEQDGGTQNPVSSPGMSQELRTMTTNSSDPFLNSGTYHSRDESTDSGLSMSSYSVPRTPDDFLNSVDEMDTGDTINQSTLPSQQNRFPDYLEAIPGTNVDLGTLEGDGMNIEGEELMPSLQEALSSDILNDMESVLAATKLDKESFLTWL.

Pro residues-rich tracts occupy residues 1 to 12 (MDPGQQPPPQPA) and 20 to 36 (PSQPPQGQGPPSGPGQP). The tract at residues 1–59 (MDPGQQPPPQPAPQGQGQPPSQPPQGQGPPSGPGQPAPAATQAAPQAPPAGHQIVHVRG) is disordered. The span at 37–51 (APAATQAAPQAPPAG) shows a compositional bias: low complexity. Residue Ser61 is modified to Phosphoserine; by LATS1 and LATS2. Thr63 carries the post-translational modification Phosphothreonine. Residues 86-100 (MRLRKLPDSFFKPPE) are a coiled coil. Lys90 carries the N6-lactoyllysine modification. Positions 91 to 114 (LPDSFFKPPEPKSHSRQASTDAGT) are disordered. Ser105 bears the Phosphoserine mark. Phosphoserine; by LATS1 and LATS2 is present on Ser109. Thr110 is subject to Phosphothreonine. At Thr119 the chain carries Phosphothreonine; by MAPK8 and MAPK9. Ser127 carries the phosphoserine; by LATS1 and LATS2 modification. Phosphoserine occurs at positions 128 and 131. A disordered region spans residues 133–158 (QLGAVSPGTLTPTGVVSGPAATPTAQ). Ser138 is modified (phosphoserine; by MAPK8 and MAPK9). Thr154 is subject to Phosphothreonine; by MAPK8 and MAPK9. Ser164 bears the Phosphoserine; by LATS1 and LATS2 mark. 2 consecutive WW domains span residues 171–204 (VPLPAGWEMAKTSSGQRYFLNHIDQTTTWQDPRK) and 230–263 (GPLPDGWEQAMTQDGEIYYINHKNKTTSWLDPRL). Ser274 and Ser289 each carry phosphoserine. Disordered stretches follow at residues 275 to 309 (QSAPVKQPPPLAPQSPQGGVMGGSNSNQQQQMRLQ) and 355 to 407 (LEQD…MSSY). The tract at residues 291-504 (QGGVMGGSNS…LDKESFLTWL (214 aa)) is transactivation domain. Residues 298–359 (SNSNQQQQMR…SQLPTLEQDG (62 aa)) are a coiled coil. Residues 355 to 391 (LEQDGGTQNPVSSPGMSQELRTMTTNSSDPFLNSGTY) are compositionally biased toward polar residues. Ser367 is modified (phosphoserine; by MAPK8 and MAPK9). 4 positions are modified to phosphoserine: Ser371, Ser381, Ser382, and Ser388. Ser397 is modified (phosphoserine; by LATS1 and LATS2). A phosphoserine; by CK1 mark is found at Ser400 and Ser403. Phosphotyrosine; by ABL1 is present on Tyr407. Residue Thr412 is modified to Phosphothreonine; by MAPK8 and MAPK9.

This sequence belongs to the YAP1 family. As to quaternary structure, part of a complex when phosphorylated that contains DSG3, PKP1, YAP1 and YWHAG; the complex is required for localization of DSG3 and YAP1 to the cell membrane in keratinocytes. Binds to the SH3 domain of the YES kinase. Binds to WBP1 and WBP2. Binds, in vitro, through the WW1 domain, to neural isoforms of ENAH that contain the PPSY motif. The phosphorylated form interacts with YWHAB. Interacts (via WW domains) with LATS1 (via PPxY motif 2). Interacts with LATS2. Interacts with TEAD1, TEAD2, TEAD3 and TEAD4. Interacts with TP73. Interacts with RUNX1. Interacts with HCK. Interacts (via WW domains) with PTPN14 (via PPxY motif 2); this interaction leads to the cytoplasmic sequestration of YAP1 and inhibits its transcriptional coactivator activity. Interacts (when phosphorylated at Ser-127) with SMAD2, SMAD3 and WWTR1. Interacts with PRRG2 (via cytoplasmic domain). Interacts (via WW domains) with PRRG4 (via cytoplasmic domain). Interacts (phosphorylated) with CLDN18; the interaction sequesters YAP1 away from the nucleus and thereby restricts transcription of YAP1 target genes. Interacts with SMAD1. Interacts with AMOTL2, the interaction is required for ubiquitination of AMOTL2 and localization of YAP1 to tight junctions. Interacts with AMOT isoform 1; the interaction facilitates translocation of YAP1 to the cytoplasm and tight junctions. In terms of assembly, interacts (via WW domain 1) with isoform 3 of ERBB4 (via PPxY motif 2). Phosphorylated by LATS1 and LATS2; leading to cytoplasmic translocation and inactivation. Phosphorylated by ABL1; leading to YAP1 stabilization, enhanced interaction with TP73 and recruitment onto proapoptotic genes; in response to DNA damage. Phosphorylation at Ser-400 and Ser-403 by CK1 is triggered by previous phosphorylation at Ser-397 by LATS proteins and leads to YAP1 ubiquitination by SCF(beta-TRCP) E3 ubiquitin ligase and subsequent degradation. Phosphorylated at Thr-119, Ser-138, Thr-154, Ser-367 and Thr-412 by MAPK8/JNK1 and MAPK9/JNK2, which is required for the regulation of apoptosis by YAP1. Phosphorylated in the nucleus by PRP4K; phosphorylation leads to nuclear exclusion. Post-translationally, lactylation by AARS1 promotes nuclear localization and stabilization of YAP1, leading to increased Hippo signaling pathway. Delactylated by SIRT1. In terms of processing, ubiquitinated by SCF(beta-TRCP) E3 ubiquitin ligase. In terms of tissue distribution, increased expression seen in some liver and prostate cancers. Isoforms lacking the transactivation domain found in striatal neurons of patients with Huntington disease (at protein level).

It localises to the cytoplasm. The protein resides in the nucleus. It is found in the cell junction. The protein localises to the tight junction. Its subcellular location is the cell membrane. Transcriptional regulator with dual roles as a coactivator and corepressor. Critical downstream regulatory target in the Hippo signaling pathway, crucial for organ size control and tumor suppression by restricting proliferation and promoting apoptosis. The Hippo signaling pathway core involves a kinase cascade featuring STK3/MST2 and STK4/MST1, along with its regulatory partner SAV1, which phosphorylates and activates LATS1/2 in complex with their regulatory protein, MOB1. This activation leads to the phosphorylation and inactivation of the YAP1 oncoprotein and WWTR1/TAZ. Phosphorylation of YAP1 by LATS1/2 prevents its nuclear translocation, thereby regulating the expression of its target genes. The transcriptional regulation of gene expression requires TEAD transcription factors and modulates cell growth, anchorage-independent growth, and induction of epithelial-mesenchymal transition (EMT). Plays a key role in tissue tension and 3D tissue shape by regulating the cortical actomyosin network, acting via ARHGAP18, a Rho GTPase activating protein that suppresses F-actin polymerization. It also suppresses ciliogenesis by acting as a transcriptional corepressor of TEAD4 target genes AURKA and PLK1. In conjunction with WWTR1, regulates TGFB1-dependent SMAD2 and SMAD3 nuclear accumulation. Synergizes with WBP2 to enhance PGR activity. In terms of biological role, activates the C-terminal fragment (CTF) of ERBB4 (isoform 3). The polypeptide is Transcriptional coactivator YAP1 (Homo sapiens (Human)).